The primary structure comprises 413 residues: Multifunctional CCA protein (413 aa).

Residues glycine 8 and arginine 11 each coordinate ATP. Residues glycine 8 and arginine 11 each contribute to the CTP site. Residues aspartate 21 and aspartate 23 each contribute to the Mg(2+) site. Arginine 91, arginine 143, and arginine 146 together coordinate ATP. Positions 91, 143, and 146 each coordinate CTP. The region spanning 232–333 (TGVHVMMVVD…VRFFERSDAL (102 aa)) is the HD domain.

The protein belongs to the tRNA nucleotidyltransferase/poly(A) polymerase family. Bacterial CCA-adding enzyme type 1 subfamily. Monomer. Can also form homodimers and oligomers. The cofactor is Mg(2+). Ni(2+) is required as a cofactor.

It catalyses the reaction a tRNA precursor + 2 CTP + ATP = a tRNA with a 3' CCA end + 3 diphosphate. The catalysed reaction is a tRNA with a 3' CCA end + 2 CTP + ATP = a tRNA with a 3' CCACCA end + 3 diphosphate. Its function is as follows. Catalyzes the addition and repair of the essential 3'-terminal CCA sequence in tRNAs without using a nucleic acid template. Adds these three nucleotides in the order of C, C, and A to the tRNA nucleotide-73, using CTP and ATP as substrates and producing inorganic pyrophosphate. tRNA 3'-terminal CCA addition is required both for tRNA processing and repair. Also involved in tRNA surveillance by mediating tandem CCA addition to generate a CCACCA at the 3' terminus of unstable tRNAs. While stable tRNAs receive only 3'-terminal CCA, unstable tRNAs are marked with CCACCA and rapidly degraded. This is Multifunctional CCA protein from Burkholderia ambifaria (strain ATCC BAA-244 / DSM 16087 / CCUG 44356 / LMG 19182 / AMMD) (Burkholderia cepacia (strain AMMD)).